We begin with the raw amino-acid sequence, 449 residues long: tRNA-2-methylthio-N(6)-dimethylallyladenosine synthase (449 aa).

Residues 3-124 (KMLYIKTYGC…LPTMLEKLDS (122 aa)) form the MTTase N-terminal domain. 6 residues coordinate [4Fe-4S] cluster: C12, C48, C87, C163, C167, and C170. The Radical SAM core domain occupies 149 to 380 (KSPTVSGLVS…QAQLMQQQLE (232 aa)). Residues 383–447 (QKLIGKVVPV…ASSLFGEVYA (65 aa)) form the TRAM domain.

It belongs to the methylthiotransferase family. MiaB subfamily. Monomer. It depends on [4Fe-4S] cluster as a cofactor.

The protein localises to the cytoplasm. It catalyses the reaction N(6)-dimethylallyladenosine(37) in tRNA + (sulfur carrier)-SH + AH2 + 2 S-adenosyl-L-methionine = 2-methylsulfanyl-N(6)-dimethylallyladenosine(37) in tRNA + (sulfur carrier)-H + 5'-deoxyadenosine + L-methionine + A + S-adenosyl-L-homocysteine + 2 H(+). In terms of biological role, catalyzes the methylthiolation of N6-(dimethylallyl)adenosine (i(6)A), leading to the formation of 2-methylthio-N6-(dimethylallyl)adenosine (ms(2)i(6)A) at position 37 in tRNAs that read codons beginning with uridine. The protein is tRNA-2-methylthio-N(6)-dimethylallyladenosine synthase of Orientia tsutsugamushi (strain Ikeda) (Rickettsia tsutsugamushi).